Reading from the N-terminus, the 277-residue chain is Proteasome subunit beta type-7 (277 aa).

Positions 1–43 are cleaved as a propeptide — removed in mature form; that stretch reads MAAVSVFQAPVGGFSFDNCRRNAVLEADFAKKGFKLPKARKTG. The active-site Nucleophile is T44.

Belongs to the peptidase T1B family. In terms of assembly, the 26S proteasome consists of a 20S proteasome core and two 19S regulatory subunits. The 20S proteasome core is a barrel-shaped complex made of 28 subunits that are arranged in four stacked rings. The two outer rings are each formed by seven alpha subunits, and the two inner rings are formed by seven beta subunits. The proteolytic activity is exerted by three beta-subunits PSMB5, PSMB6 and PSMB7.

The protein localises to the cytoplasm. Its subcellular location is the nucleus. It carries out the reaction Cleavage of peptide bonds with very broad specificity.. Component of the 20S core proteasome complex involved in the proteolytic degradation of most intracellular proteins. This complex plays numerous essential roles within the cell by associating with different regulatory particles. Associated with two 19S regulatory particles, forms the 26S proteasome and thus participates in the ATP-dependent degradation of ubiquitinated proteins. The 26S proteasome plays a key role in the maintenance of protein homeostasis by removing misfolded or damaged proteins that could impair cellular functions, and by removing proteins whose functions are no longer required. Associated with the PA200 or PA28, the 20S proteasome mediates ubiquitin-independent protein degradation. This type of proteolysis is required in several pathways including spermatogenesis (20S-PA200 complex) or generation of a subset of MHC class I-presented antigenic peptides (20S-PA28 complex). Within the 20S core complex, PSMB7 displays a trypsin-like activity. This chain is Proteasome subunit beta type-7 (Psmb7), found in Rattus norvegicus (Rat).